The sequence spans 442 residues: UDP-N-acetylmuramoylalanine--D-glutamate ligase (442 aa).

An ATP-binding site is contributed by 113–119; that stretch reads GSNGKTT.

It belongs to the MurCDEF family.

The protein localises to the cytoplasm. It catalyses the reaction UDP-N-acetyl-alpha-D-muramoyl-L-alanine + D-glutamate + ATP = UDP-N-acetyl-alpha-D-muramoyl-L-alanyl-D-glutamate + ADP + phosphate + H(+). Its pathway is cell wall biogenesis; peptidoglycan biosynthesis. In terms of biological role, cell wall formation. Catalyzes the addition of glutamate to the nucleotide precursor UDP-N-acetylmuramoyl-L-alanine (UMA). In Coxiella burnetii (strain Dugway 5J108-111), this protein is UDP-N-acetylmuramoylalanine--D-glutamate ligase.